Here is a 251-residue protein sequence, read N- to C-terminus: HTH-type transcriptional regulator IolR (251 aa).

The 57-residue stretch at 1–57 (MKLMRIQEMEEYILSHGTVSLDELCQVFNVSKNTVRRDINKLTEKGAIEKVYGGVTS) folds into the HTH deoR-type domain. Positions 19–38 (VSLDELCQVFNVSKNTVRRD) form a DNA-binding region, H-T-H motif.

Functionally, iol operon repressor. This chain is HTH-type transcriptional regulator IolR (iolR), found in Bacillus subtilis (strain 168).